Reading from the N-terminus, the 310-residue chain is Mycothiol acetyltransferase (310 aa).

N-acetyltransferase domains follow at residues 5 to 155 (TTVE…HPAR) and 160 to 309 (PPFR…LPAA). 80–82 (LLV) lines the acetyl-CoA pocket. 1D-myo-inositol 2-(L-cysteinylamino)-2-deoxy-alpha-D-glucopyranoside contacts are provided by Asp-187, Lys-226, and Glu-238. 242–244 (IAT) contributes to the acetyl-CoA binding site. 1D-myo-inositol 2-(L-cysteinylamino)-2-deoxy-alpha-D-glucopyranoside is bound at residue Tyr-276. 281-286 (NERALR) contributes to the acetyl-CoA binding site.

This sequence belongs to the acetyltransferase family. MshD subfamily. As to quaternary structure, monomer.

The enzyme catalyses 1D-myo-inositol 2-(L-cysteinylamino)-2-deoxy-alpha-D-glucopyranoside + acetyl-CoA = mycothiol + CoA + H(+). Functionally, catalyzes the transfer of acetyl from acetyl-CoA to desacetylmycothiol (Cys-GlcN-Ins) to form mycothiol. The protein is Mycothiol acetyltransferase of Acidimicrobium ferrooxidans (strain DSM 10331 / JCM 15462 / NBRC 103882 / ICP).